Consider the following 327-residue polypeptide: Vacuolar protein sorting-associated protein 26A (327 aa).

Positions 306–327 are disordered; that stretch reads RTNFHQRFESPESQASAEQPEM. Ser315 carries the phosphoserine modification. The span at 316–327 shows a compositional bias: polar residues; the sequence is PESQASAEQPEM.

This sequence belongs to the VPS26 family. In terms of assembly, component of the heterotrimeric retromer cargo-selective complex (CSC), also described as vacuolar protein sorting subcomplex (VPS), formed by VPS26 (VPS26A or VPS26B), VPS29 and VPS35. The CSC has a highly elongated structure with VPS26 and VPS29 binding independently at opposite distal ends of VPS35 as central platform. The CSC is believed to associate with variable sorting nexins to form functionally distinct retromer complex variants. The originally described retromer complex (also called SNX-BAR retromer) is a pentamer containing the CSC and a heterodimeric membrane-deforming subcomplex formed between SNX1 or SNX2 and SNX5 or SNX6 (also called SNX-BAR subcomplex); the respective CSC and SNX-BAR subcomplexes associate with low affinity. The CSC associates with SNX3 to form a SNX3-retromer complex. The CSC associates with SNX27, the WASH complex and the SNX-BAR subcomplex to form the SNX27-retromer complex. Interacts with VPS29, VPS35, SNX1, SNX2, SNX5, SNX6, SNX3, SNX27, RAB7A, ECPAS, EHD1, WASHC5, SORL1.

It localises to the cytoplasm. The protein resides in the endosome membrane. It is found in the early endosome. Acts as a component of the retromer cargo-selective complex (CSC). The CSC is believed to be the core functional component of retromer or respective retromer complex variants acting to prevent missorting of selected transmembrane cargo proteins into the lysosomal degradation pathway. The recruitment of the CSC to the endosomal membrane involves RAB7A and SNX3. The SNX-BAR retromer mediates retrograde transport of cargo proteins from endosomes to the trans-Golgi network (TGN) and is involved in endosome-to-plasma membrane transport for cargo protein recycling. The SNX3-retromer mediates the retrograde endosome-to-TGN transport of WLS distinct from the SNX-BAR retromer pathway. The SNX27-retromer is believed to be involved in endosome-to-plasma membrane trafficking and recycling of a broad spectrum of cargo proteins. The CSC seems to act as recruitment hub for other proteins, such as the WASH complex and TBC1D5. Required for retrograde transport of lysosomal enzyme receptor IGF2R. Required to regulate transcytosis of the polymeric immunoglobulin receptor (pIgR-pIgA). Required for the endosomal localization of WASHC2A (indicative for the WASH complex). Required for the endosomal localization of TBC1D5. Mediates retromer cargo recognition of SORL1 and is involved in trafficking of SORL1 implicated in sorting and processing of APP. Involved in retromer-independent lysosomal sorting of F2R. Involved in recycling of ADRB2. Enhances the affinity of SNX27 for PDZ-binding motifs in cargo proteins. This Homo sapiens (Human) protein is Vacuolar protein sorting-associated protein 26A.